Here is a 451-residue protein sequence, read N- to C-terminus: Gamma-aminobutyric acid receptor subunit alpha-2 (451 aa).

A signal peptide spans 1-28; the sequence is MKTKLNIYNMQFLLFVFLVWDPARLVLA. The Extracellular segment spans residues 29–249; sequence NIQEDEAKNN…MTAHFHLKRK (221 aa). Asn38 carries an N-linked (GlcNAc...) asparagine glycan. Arg94 provides a ligand contact to 4-aminobutanoate. Asn138 carries N-linked (GlcNAc...) asparagine glycosylation. Residue Thr157 coordinates 4-aminobutanoate. The cysteines at positions 166 and 180 are disulfide-linked. Residues 250–270 traverse the membrane as a helical segment; that stretch reads IGYFVIQTYLPCIMTVILSQV. The Cytoplasmic segment spans residues 271–280; that stretch reads SFWLNRESVP. Residues 281-300 traverse the membrane as a helical segment; it reads ARTVFGVTTVLTMTTLSISA. Residues 301–311 are Extracellular-facing; the sequence is RNSLPKVAYAT. The helical transmembrane segment at 312 to 332 threads the bilayer; the sequence is AMDWFIAVCYAFVFSALIEFA. The Cytoplasmic portion of the chain corresponds to 333 to 420; sequence TVNYFTKRGW…FNSVSKIDRM (88 aa). The chain crosses the membrane as a helical span at residues 421–441; it reads SRIVFPVLFGTFNLVYWATYL. Topologically, residues 442–451 are extracellular; sequence NREPVLGVSP.

It belongs to the ligand-gated ion channel (TC 1.A.9) family. Gamma-aminobutyric acid receptor (TC 1.A.9.5) subfamily. GABRA2 sub-subfamily. In terms of assembly, heteropentamer, formed by a combination of alpha (GABRA1-6), beta (GABRB1-3), gamma (GABRG1-3), delta (GABRD), epsilon (GABRE), rho (GABRR1-3), pi (GABRP) and theta (GABRQ) subunits, each subunit exhibiting distinct physiological and pharmacological properties. Interacts with UBQLN1. Interacts with KIF21B. Interacts with LHFPL4. Interacts with SHISA7; interaction leads to the regulation of GABA(A) receptor trafficking, channel deactivation kinetics and pharmacology. In terms of processing, glycosylated.

Its subcellular location is the postsynaptic cell membrane. The protein resides in the cell membrane. It is found in the cytoplasmic vesicle membrane. It localises to the cell projection. The protein localises to the dendrite. It catalyses the reaction chloride(in) = chloride(out). Activated by pentobarbital. Inhibited by the antagonist bicuculline. In terms of biological role, alpha subunit of the heteropentameric ligand-gated chloride channel gated by gamma-aminobutyric acid (GABA), a major inhibitory neurotransmitter in the brain. GABA-gated chloride channels, also named GABA(A) receptors (GABAAR), consist of five subunits arranged around a central pore and contain GABA active binding site(s) located at the alpha and beta subunit interfaces. When activated by GABA, GABAARs selectively allow the flow of chloride anions across the cell membrane down their electrochemical gradient. Chloride influx into the postsynaptic neuron following GABAAR opening decreases the neuron ability to generate a new action potential, thereby reducing nerve transmission. The alpha-2 subunit exhibits synaptogenic activity together with beta-2 and very little to no activity together with beta-3, the gamma-2 subunit being necessary but not sufficient to induce rapid synaptic contacts formation. The polypeptide is Gamma-aminobutyric acid receptor subunit alpha-2 (Homo sapiens (Human)).